The chain runs to 105 residues: Defensin-like protein 106 (105 aa).

The signal sequence occupies residues 1–24 (MANTPKTLIAFVFSVIVIISYVHC). Intrachain disulfides connect cysteine 57-cysteine 94, cysteine 63-cysteine 87, cysteine 73-cysteine 92, and cysteine 77-cysteine 93.

This sequence belongs to the DEFL family.

The protein localises to the secreted. This is Defensin-like protein 106 from Arabidopsis thaliana (Mouse-ear cress).